The chain runs to 537 residues: Oviduct-specific glycoprotein (537 aa).

The signal sequence occupies residues 1 to 18; the sequence is LLLCVGLLLVLKHHDGAA. Positions 19–382 constitute a GH18 domain; that stretch reads HKLVCYFTNW…HTLNNLLVND (364 aa). Residues cysteine 23 and cysteine 48 are joined by a disulfide bond. Chitin contacts are provided by residues 68–69, 95–98, tyrosine 139, 208–211, and tryptophan 352; these read PQ, GGWN, and LSYD. Asparagine 399 is a glycosylation site (N-linked (GlcNAc...) asparagine). Disordered stretches follow at residues 446-475 and 498-537; these read EIAT…GEKP and TGQK…ERRL. A compositionally biased stretch (basic and acidic residues) spans 528–537; that stretch reads GRAETLERRL.

The protein belongs to the glycosyl hydrolase 18 family. Oviduct.

Its subcellular location is the cytoplasmic vesicle. The protein localises to the secretory vesicle. Its function is as follows. Binds to oocyte zona pellucida in vivo. May play a role in the fertilization process and/or early embryonic development. This is Oviduct-specific glycoprotein (OVGP1) from Bos taurus (Bovine).